We begin with the raw amino-acid sequence, 123 residues long: Large ribosomal subunit protein uL14 (123 aa).

It belongs to the universal ribosomal protein uL14 family. As to quaternary structure, part of the 50S ribosomal subunit. Forms a cluster with proteins L3 and L19. In the 70S ribosome, L14 and L19 interact and together make contacts with the 16S rRNA in bridges B5 and B8.

Binds to 23S rRNA. Forms part of two intersubunit bridges in the 70S ribosome. The sequence is that of Large ribosomal subunit protein uL14 from Chromohalobacter salexigens (strain ATCC BAA-138 / DSM 3043 / CIP 106854 / NCIMB 13768 / 1H11).